Here is a 222-residue protein sequence, read N- to C-terminus: Coiled-coil domain-containing protein 70 (222 aa).

Coiled coils occupy residues 34 to 62 (LQEE…WNFR) and 129 to 188 (NALW…KAAW).

The protein is Coiled-coil domain-containing protein 70 (CCDC70) of Bos taurus (Bovine).